Here is a 298-residue protein sequence, read N- to C-terminus: UDP-N-acetylenolpyruvoylglucosamine reductase (298 aa).

In terms of domain architecture, FAD-binding PCMH-type spans 26–191 (KTGGPADWLA…LDATFALEPG (166 aa)). Arginine 170 is a catalytic residue. Catalysis depends on serine 220, which acts as the Proton donor. Glutamate 290 is an active-site residue.

It belongs to the MurB family. FAD is required as a cofactor.

Its subcellular location is the cytoplasm. The enzyme catalyses UDP-N-acetyl-alpha-D-muramate + NADP(+) = UDP-N-acetyl-3-O-(1-carboxyvinyl)-alpha-D-glucosamine + NADPH + H(+). The protein operates within cell wall biogenesis; peptidoglycan biosynthesis. In terms of biological role, cell wall formation. In Limosilactobacillus reuteri subsp. reuteri (strain JCM 1112) (Lactobacillus reuteri), this protein is UDP-N-acetylenolpyruvoylglucosamine reductase.